The chain runs to 29 residues: Cyclotide cter-N (29 aa).

Positions Gly-1–Asn-29 form a cross-link, cyclopeptide (Gly-Asn). 3 cysteine pairs are disulfide-bonded: Cys-5-Cys-19, Cys-9-Cys-21, and Cys-14-Cys-26.

This is a cyclic peptide.

It is found in the secreted. In terms of biological role, probably participates in a plant defense mechanism. The sequence is that of Cyclotide cter-N from Clitoria ternatea (Butterfly pea).